A 304-amino-acid polypeptide reads, in one-letter code: Proline dehydrogenase 2 (304 aa).

Lysine 97 serves as a coordination point for substrate. Aspartate 131 is an active-site residue. Residues methionine 132 and glutamine 160 each contribute to the FAD site. Arginine 181 is an active-site residue. FAD-binding positions include 184–186 and 223–224; these read KGA and TH. Residue 285-286 coordinates substrate; it reads RR.

Belongs to the proline dehydrogenase family. It depends on FAD as a cofactor.

It carries out the reaction L-proline + a quinone = (S)-1-pyrroline-5-carboxylate + a quinol + H(+). The protein operates within amino-acid degradation; L-proline degradation into L-glutamate; L-glutamate from L-proline: step 1/2. Functionally, converts proline to delta-1-pyrroline-5-carboxylate. The polypeptide is Proline dehydrogenase 2 (Bacillus subtilis subsp. natto).